We begin with the raw amino-acid sequence, 377 residues long: Homoserine O-succinyltransferase (377 aa).

One can recognise an AB hydrolase-1 domain in the interval 50 to 358 (NAVLICHALS…PSSYGHDSFL (309 aa)). The active-site Nucleophile is the S156. R226 serves as a coordination point for substrate. Residues D321 and H354 contribute to the active site. D355 provides a ligand contact to substrate.

This sequence belongs to the AB hydrolase superfamily. MetX family. Homodimer.

Its subcellular location is the cytoplasm. It carries out the reaction L-homoserine + succinyl-CoA = O-succinyl-L-homoserine + CoA. It functions in the pathway amino-acid biosynthesis; L-methionine biosynthesis via de novo pathway; O-succinyl-L-homoserine from L-homoserine: step 1/1. In terms of biological role, transfers a succinyl group from succinyl-CoA to L-homoserine, forming succinyl-L-homoserine. This is Homoserine O-succinyltransferase from Nitrosomonas europaea (strain ATCC 19718 / CIP 103999 / KCTC 2705 / NBRC 14298).